Here is a 327-residue protein sequence, read N- to C-terminus: Phenylalanine--tRNA ligase alpha subunit (327 aa).

Glu252 contacts Mg(2+).

Belongs to the class-II aminoacyl-tRNA synthetase family. Phe-tRNA synthetase alpha subunit type 1 subfamily. Tetramer of two alpha and two beta subunits. Mg(2+) is required as a cofactor.

The protein resides in the cytoplasm. It catalyses the reaction tRNA(Phe) + L-phenylalanine + ATP = L-phenylalanyl-tRNA(Phe) + AMP + diphosphate + H(+). This chain is Phenylalanine--tRNA ligase alpha subunit, found in Pectobacterium carotovorum subsp. carotovorum (strain PC1).